Reading from the N-terminus, the 308-residue chain is MSRKINDTFDACFWEEYLESQGSRLPPLPDVQRITPRVVRVLAGNPGGFQLQGTNTYLVGSGREKILIDTGQGLPVWIDHIAQVVAENDLKIVAALITHWHGDHTGGVPDLLVHFPHLKSAIYKNQPDRGQQDILDGQVFQVEGATIRALHTPGHAVDHMCFVLEEEQAIFTGDNVLGHGFTVVEDLGAYTNSLGIMNDQGCQIGYPAHGVVITDMPAKMAEYRDQRLRRERQVISALRESRQKNAGRGSITVQEVVQSVHGTVPEDVSKKALEPFMQEVLLKLAGDRKVAFELQGGVKRWFIVGNRV.

Residues His99, His101, Asp103, and His104 each contribute to the Zn(2+) site. Asp103 serves as the catalytic Proton donor/acceptor.

This sequence belongs to the metallo-beta-lactamase superfamily. It depends on Zn(2+) as a cofactor.

It carries out the reaction atrochrysone carboxyl-[ACP] + H2O = atrochrysone carboxylate + holo-[ACP] + H(+). Its pathway is secondary metabolite biosynthesis. Its function is as follows. Atrochrysone carboxyl ACP thioesterase; part of the gene cluster that mediates the biosynthesis of physcion, a natural anthraquinone fungicide that can prevent plant fungal infections. The pathway begins with the polyketide synthase AcPKS that condenses 8 malonyl-CoA units to synthesize atrochrysone thioester which is released from the synthase by the atrochrysone carboxyl ACP thioesterase AcTE that breaks the thioester bond and leads to free atrochrysone carboxylic acid. Spontaneous decarboxylation of atrochrysone carboxylic acid leads to the formation of atrochrysone. Then, atrochrysone undergoes spontaneous dehydration and oxidation, giving the products emodin anthrone and emodin. The O-methyltransferase AcOMT then methylates the C-6 hydroxyl of emodin to form physcion. This Aspergillus chevalieri (Eurotium chevalieri) protein is Atrochrysone carboxyl ACP thioesterase.